The chain runs to 1786 residues: uncharacterized protein (1786 aa).

Disordered stretches follow at residues 140 to 191 (QGLR…LPEA), 203 to 329 (RRES…RGGV), and 400 to 480 (GGSD…TPPE). A compositionally biased stretch (polar residues) spans 149 to 158 (SDMNSQTSLT). Positions 232–247 (GHAPEAPAPGESPASS) are enriched in low complexity. The segment covering 248–259 (QCLPSQACENDF) has biased composition (polar residues). Residues 306-329 (TSCRQHREEAGDRAGAGEDKRGGV) are compositionally biased toward basic and acidic residues. Positions 422 to 438 (STTPSTNTTRTPSPISS) are enriched in low complexity. Pro residues predominate over residues 467–480 (VPPPTGPGTATPPE). Position 721 is a phosphothreonine (Thr721). Disordered stretches follow at residues 746 to 907 (SESK…SDGH), 1081 to 1180 (VRDV…NSSP), 1218 to 1242 (ASAQRTPEKPKEEEAKEEGKAPKPA), 1291 to 1348 (KEGV…VSAR), 1362 to 1460 (SLYI…NSDC), and 1477 to 1550 (LLGR…EHTP). Composition is skewed to basic and acidic residues over residues 810–828 (MQREHEFKMERGEVTDTSH) and 845–861 (KPWERGLQRQSSRHSEA). Positions 1105–1115 (KGSGDSSDKGS) are enriched in low complexity. Residues 1131 to 1140 (TPASGGSRSL) are compositionally biased toward polar residues. Positions 1153 to 1164 (PREEGVDREPRE) are enriched in basic and acidic residues. A compositionally biased stretch (polar residues) spans 1167–1180 (SQVSNGGRLLNSSP). Ser1179 carries the phosphoserine modification. 2 stretches are compositionally biased toward basic and acidic residues: residues 1223–1238 (TPEKPKEEEAKEEGKA) and 1301–1319 (DPDKLAKQLGQVEERDTGH). Composition is skewed to polar residues over residues 1336–1345 (RNSNPSTESV), 1389–1401 (NVFTVSSSSTQKT), and 1504–1521 (ARSQVPSNPKGSQVSGTS). Arg1767 is modified (omega-N-methylarginine).

This is an uncharacterized protein from Mus musculus (Mouse).